The chain runs to 232 residues: Cilia- and flagella-associated protein 95 (232 aa).

Over methionine 1–lysine 96 the chain is Extracellular. Asparagine 75 carries N-linked (GlcNAc...) asparagine glycosylation. Residues methionine 97–leucine 115 form a helical membrane-spanning segment. Residues asparagine 116–lysine 232 are Cytoplasmic-facing. Positions leucine 153–proline 163 are mn.

In terms of assembly, microtubule inner protein component of sperm flagellar doublet microtubules. Interacts with MYH9. Interacts with MYH10. In terms of tissue distribution, expressed in trachea multiciliated cells.

The protein localises to the cytoplasm. It localises to the cytoskeleton. The protein resides in the cilium axoneme. It is found in the flagellum axoneme. Its subcellular location is the cell membrane. In terms of biological role, microtubule inner protein (MIP) part of the dynein-decorated doublet microtubules (DMTs) in cilia axoneme, which is required for motile cilia beating. The chain is Cilia- and flagella-associated protein 95 from Bos taurus (Bovine).